A 254-amino-acid polypeptide reads, in one-letter code: 3-deoxy-manno-octulosonate cytidylyltransferase (254 aa).

The protein belongs to the KdsB family.

The protein localises to the cytoplasm. It catalyses the reaction 3-deoxy-alpha-D-manno-oct-2-ulosonate + CTP = CMP-3-deoxy-beta-D-manno-octulosonate + diphosphate. It participates in nucleotide-sugar biosynthesis; CMP-3-deoxy-D-manno-octulosonate biosynthesis; CMP-3-deoxy-D-manno-octulosonate from 3-deoxy-D-manno-octulosonate and CTP: step 1/1. It functions in the pathway bacterial outer membrane biogenesis; lipopolysaccharide biosynthesis. In terms of biological role, activates KDO (a required 8-carbon sugar) for incorporation into bacterial lipopolysaccharide in Gram-negative bacteria. The protein is 3-deoxy-manno-octulosonate cytidylyltransferase of Haemophilus influenzae (strain 86-028NP).